The sequence spans 701 residues: Ephexin-1 (701 aa).

Composition is skewed to basic and acidic residues over residues M1–K11 and G26–R48. Positions M1–D141 are disordered. The segment at M1–K264 is regulatory region; modulates activity toward RHOA, RAC1 and CDC42. Over residues A120–T132 the composition is skewed to polar residues. Y172 is subject to Phosphotyrosine. The segment at R187–A226 is disordered. Over residues D206–P218 the composition is skewed to acidic residues. The 185-residue stretch at K264–G448 folds into the DH domain. Residues W480 to R592 enclose the PH domain. Residues L603 to N664 enclose the SH3 domain. Basic and acidic residues predominate over residues H679 to K690. Positions H679–Q701 are disordered. Residues D691–Q701 are compositionally biased toward basic residues.

In terms of assembly, interacts with CDK5R1 and EPHA4; activated by EPHA4 through the CDK5 kinase. Phosphorylation by CDK5 upon EPHA4 activation by EFNA1 may regulate dendritic spine morphogenesis. Src-dependent phosphorylation at Tyr-172 upon EPHA4 activation increases the guanine exchange factor activity toward RHOA. In terms of tissue distribution, expressed in telencephalic neurons (at protein level). Expressed in brain, spinal cord and testis.

The protein resides in the cytoplasm. It is found in the membrane. It localises to the cell projection. The protein localises to the growth cone. Functionally, acts as a guanine nucleotide exchange factor (GEF) which differentially activates the GTPases RHOA, RAC1 and CDC42. Plays a role in axon guidance regulating ephrin-induced growth cone collapse and dendritic spine morphogenesis. Upon activation by ephrin through EPHA4, the GEF activity switches toward RHOA resulting in its activation. Activated RHOA promotes cone retraction at the expense of RAC1- and CDC42-stimulated growth cone extension. The chain is Ephexin-1 (Ngef) from Rattus norvegicus (Rat).